The following is a 340-amino-acid chain: Pre-mRNA-splicing factor cwf17 (340 aa).

WD repeat units follow at residues 48-87 (GHTA…KNYG), 91-130 (GCKG…KIRK), 133-173 (GHAG…CIKT), 175-214 (EEKY…CSHV), 217-256 (GHKD…SAQR), 267-306 (GQEH…RYVL), and 308-339 (GHEG…LGEL).

Belongs to the 40S cdc5-associated complex (or cwf complex), a spliceosome sub-complex reminiscent of a late-stage spliceosome composed of the U2, U5 and U6 snRNAs and at least brr2, cdc5, cwf2/prp3, cwf3/syf1, cwf4/syf3, cwf5/ecm2, spp42/cwf6, cwf7/spf27, cwf8, cwf9, cwf10, cwf11, cwf12, prp45/cwf13, cwf14, cwf15, cwf16, cwf17, cwf18, cwf19, cwf20, cwf21, cwf22, cwf23, cwf24, cwf25, cwf26, cyp7/cwf27, cwf28, cwf29/ist3, lea1, msl1, prp5/cwf1, prp10, prp12/sap130, prp17, prp22, sap61, sap62, sap114, sap145, slu7, smb1, smd1, smd3, smf1, smg1 and syf2.

It is found in the nucleus. Involved in mRNA splicing where it associates with cdc5 and the other cwf proteins as part of the spliceosome. The chain is Pre-mRNA-splicing factor cwf17 (cwf17) from Schizosaccharomyces pombe (strain 972 / ATCC 24843) (Fission yeast).